The primary structure comprises 1001 residues: E3 ubiquitin-protein ligase BRE1B (1001 aa).

The interval 1-40 (MSGLSNKRAAGDGGSGPPEKKMNREEKTTTTLIEPIRLGG) is disordered. Residues 18–28 (PEKKMNREEKT) are compositionally biased toward basic and acidic residues. Lysine 20 is subject to N6-acetyllysine. At serine 42 the chain carries Phosphoserine. A coiled-coil region spans residues 55 to 91 (KNKKLAERLEQRQACEDELRERIEKLEKRQATDDATL). The interval 122-142 (TEVPGCQEGLTRDVIPRPDPG) is disordered. Coiled coils occupy residues 189–377 (KAAV…LRSL) and 437–525 (LQKK…ASGS). 2 positions are modified to N6-acetyllysine: lysine 355 and lysine 517. The interval 519–647 (RAQASGSSHC…KAKVEEAKRK (129 aa)) is disordered. Positions 565 to 576 (ALLAGATSATSS) are enriched in low complexity. Residues lysine 578 and lysine 579 each participate in a glycyl lysine isopeptide (Lys-Gly) (interchain with G-Cter in SUMO2) cross-link. 2 positions are modified to phosphoserine: serine 584 and serine 585. 2 stretches are compositionally biased toward basic and acidic residues: residues 602–619 (RGRE…EREG) and 633–647 (RADR…AKRK). Positions 627–946 (AASTLSRADR…EEIKEYKARL (320 aa)) form a coiled coil. Residues 948–987 (CPCCNTRKKDAVLTKCFHVFCFECVRGRYEARQRKCPKCN) form an RING-type zinc finger.

This sequence belongs to the BRE1 family. Component of the RNF20/40 complex (also known as BRE1 complex) probably composed of 2 copies of RNF20/BRE1A and 2 copies of RNF40/BRE1B. Interacts with UBE2E1/UBCH6. Interacts with RB1 and WAC.

It is found in the nucleus. The enzyme catalyses S-ubiquitinyl-[E2 ubiquitin-conjugating enzyme]-L-cysteine + [acceptor protein]-L-lysine = [E2 ubiquitin-conjugating enzyme]-L-cysteine + N(6)-ubiquitinyl-[acceptor protein]-L-lysine.. The protein operates within protein modification; protein ubiquitination. Functionally, component of the RNF20/40 E3 ubiquitin-protein ligase complex that mediates monoubiquitination of 'Lys-120' of histone H2B (H2BK120ub1). H2BK120ub1 gives a specific tag for epigenetic transcriptional activation and is also prerequisite for histone H3 'Lys-4' and 'Lys-79' methylation (H3K4me and H3K79me, respectively). It thereby plays a central role in histone code and gene regulation. The RNF20/40 complex forms a H2B ubiquitin ligase complex in cooperation with the E2 enzyme UBE2A or UBE2B; reports about the cooperation with UBE2E1/UBCH are contradictory. Required for transcriptional activation of Hox genes. This is E3 ubiquitin-protein ligase BRE1B (Rnf40) from Mus musculus (Mouse).